We begin with the raw amino-acid sequence, 146 residues long: Large ribosomal subunit protein uL13 (146 aa).

It belongs to the universal ribosomal protein uL13 family. Part of the 50S ribosomal subunit.

In terms of biological role, this protein is one of the early assembly proteins of the 50S ribosomal subunit, although it is not seen to bind rRNA by itself. It is important during the early stages of 50S assembly. The polypeptide is Large ribosomal subunit protein uL13 (Mycoplasma genitalium (strain ATCC 33530 / DSM 19775 / NCTC 10195 / G37) (Mycoplasmoides genitalium)).